Reading from the N-terminus, the 554-residue chain is Valerianol synthase TPS8 (554 aa).

A DDXXD motif motif is present at residues Q288 to G292. Mg(2+) is bound by residues D307, D311, D452, S456, and E460.

It belongs to the terpene synthase family. It depends on Mg(2+) as a cofactor.

The enzyme catalyses (2E,6E)-farnesyl diphosphate + H2O = valerianol + diphosphate. Its pathway is secondary metabolite biosynthesis; terpenoid biosynthesis. Its function is as follows. Terpene synthase that catalyzes the biosynthesis of the terpene valerianol. In Camellia sinensis (Tea plant), this protein is Valerianol synthase TPS8.